The primary structure comprises 569 residues: Proline--tRNA ligase (569 aa).

Belongs to the class-II aminoacyl-tRNA synthetase family. ProS type 1 subfamily. Homodimer.

It localises to the cytoplasm. It carries out the reaction tRNA(Pro) + L-proline + ATP = L-prolyl-tRNA(Pro) + AMP + diphosphate. Functionally, catalyzes the attachment of proline to tRNA(Pro) in a two-step reaction: proline is first activated by ATP to form Pro-AMP and then transferred to the acceptor end of tRNA(Pro). As ProRS can inadvertently accommodate and process non-cognate amino acids such as alanine and cysteine, to avoid such errors it has two additional distinct editing activities against alanine. One activity is designated as 'pretransfer' editing and involves the tRNA(Pro)-independent hydrolysis of activated Ala-AMP. The other activity is designated 'posttransfer' editing and involves deacylation of mischarged Ala-tRNA(Pro). The misacylated Cys-tRNA(Pro) is not edited by ProRS. This Campylobacter jejuni subsp. jejuni serotype O:2 (strain ATCC 700819 / NCTC 11168) protein is Proline--tRNA ligase.